Reading from the N-terminus, the 227-residue chain is 2,3-bisphosphoglycerate-dependent phosphoglycerate mutase (227 aa).

Residues 7–14 (RHGFSEWN), 20–21 (TG), R59, 86–89 (ERHY), K97, 113–114 (RR), and 182–183 (GN) contribute to the substrate site. The Tele-phosphohistidine intermediate role is filled by H8. The Proton donor/acceptor role is filled by E86.

Belongs to the phosphoglycerate mutase family. BPG-dependent PGAM subfamily. As to quaternary structure, homodimer.

The enzyme catalyses (2R)-2-phosphoglycerate = (2R)-3-phosphoglycerate. It participates in carbohydrate degradation; glycolysis; pyruvate from D-glyceraldehyde 3-phosphate: step 3/5. Its function is as follows. Catalyzes the interconversion of 2-phosphoglycerate and 3-phosphoglycerate. The chain is 2,3-bisphosphoglycerate-dependent phosphoglycerate mutase from Actinobacillus pleuropneumoniae serotype 5b (strain L20).